Reading from the N-terminus, the 868-residue chain is MAMPLCSLTSYNPITTTLRGHHFLTINAYVKTQCIPCFFIKLHTRSSASKQRIIDLRSGSSNIVACVGEGATSLSSHSDIMKTGKREEIPPGVWKDDISDSIMSSHKPEADEKRVEILIAEIKSMFRGMGDGETTPSAYDTAWVAKIPALDGSDHPHFPQTLQWILQNQLQDGSWGEGTYFSAYDRLLATLACIITLTVWRTGQTQVRQGIEFFRKHAGTMEDEADNHQPIGFEFVFPAMINEAKSLCLDLPYDTPFIKQIIEKREAKLKMIPTDTLYTVPTTFLHYLEGLQEIIDCQKIIKLQSKDGSFLSSPASTAAVFMCTGNTKCLEFLNFVLIKFGNHVPCQYPLDLFERLWAVDIVERLGIDRHFKKEIKDALDYVYSHWDERGIGWARENPVAYIDVMATGIRILRLHRYNVSSDILKTFRDENGEFYRFPGQSERGVTDMLNLNRCSHVAFPGETVMEEAKLCTERYLWNALENVNPLDKWDLKENIRGEVEYALKYPWLRRLPRLETRNYIEHYGANDVWLGKMMHMMPYINDRKYLELAKLDFNNVQSIHQKELRELRRWWKSSGFAELNFLPDRVAEIFFSIASSMFEPELATCRAVYTKSTLCTVILDGFYDVHGSAEDIMLFNEAVKRWDHSLLDRMPEHIKTCFLALYNVVNEIAEEGRKRQGHDVLPYIRNLWEIQLESFTKEAEWSRAEHVPSFHEYIEAAAISSALPTLVLIGVIFTGEVLTDHILSQIDYRSKFAYLMSLTGRLANDTKTYQVERSRGEVASAIQCYMKENPELSEEEALEYIYRLMENALADFKREFLKTKDVPEYCRRLVFDNARSMQLIYMEGDGFKLSHETEIKEHVKKILFEPVA.

Mg(2+) is bound by residues D620, D624, N764, T768, and E772.

This sequence belongs to the terpene synthase family. Tpsd subfamily. The cofactor is Mg(2+).

The enzyme catalyses (+)-copalyl diphosphate = (-)-pimara-8(14),15-diene + diphosphate. The protein operates within terpene metabolism; oleoresin biosynthesis. In terms of biological role, involved in defensive oleoresin formation in conifers in response to insect attack or other injury. Involved in diterpene (C20) olefins biosynthesis. Monofunctional enzyme lacking the DXDD motif in the class II active site relevant for the cyclization of geranylgeranyl diphosphate (GGPP). Requires (+)-copalyl diphosphate ((+)-CPP) as substrate, but no activity with GGPP or ent-CPP. Pimaradiene is the major products of the enzyme. The chain is Monofunctional pimaradiene synthase from Pinus banksiana (Jack pine).